A 456-amino-acid polypeptide reads, in one-letter code: RuvB-like 1 (456 aa).

Lys-2 is covalently cross-linked (Glycyl lysine isopeptide (Lys-Gly) (interchain with G-Cter in SUMO2)). An ATP-binding site is contributed by 70–77 (GPPGTGKT). A Glycyl lysine isopeptide (Lys-Gly) (interchain with G-Cter in SUMO1); alternate cross-link involves residue Lys-225. Lys-225 is covalently cross-linked (Glycyl lysine isopeptide (Lys-Gly) (interchain with G-Cter in SUMO2); alternate). Lys-445 is covalently cross-linked (Glycyl lysine isopeptide (Lys-Gly) (interchain with G-Cter in SUMO2)). N6-acetyllysine is present on Lys-453.

This sequence belongs to the RuvB family. Forms homohexameric rings. Can form a dodecamer with RUVBL2 made of two stacked hexameric rings; however, even though RUVBL1 and RUVBL2 are present in equimolar ratio, the oligomeric status of each hexamer is not known. Oligomerization may regulate binding to nucleic acids and conversely, binding to nucleic acids may affect the dodecameric assembly. Interaction of the complex with DHX34 results in conformational changes of the N-terminus of the RUVBL2 subunits, resulting in loss of nucleotide binding ability and ATP hydrolysis of the complex. Interacts with the transcriptional activation domain of MYC. Component of the RNA polymerase II holoenzyme complex. May also act to bridge the LEF1/TCF1-CTNNB1 complex and TBP. Component of the NuA4 histone acetyltransferase complex which contains the catalytic subunit KAT5/TIP60 and the subunits EP400, TRRAP/PAF400, BRD8/SMAP, EPC1, DMAP1/DNMAP1, RUVBL1/TIP49, RUVBL2, ING3, actin, ACTL6A/BAF53A, MORF4L1/MRG15, MORF4L2/MRGX, MRGBP, YEATS4/GAS41, VPS72/YL1 and MEAF6. The NuA4 complex interacts with MYC and the adenovirus E1A protein. RUVBL1 interacts with EP400. Component of a NuA4-related complex which contains EP400, TRRAP/PAF400, SRCAP, BRD8/SMAP, EPC1, DMAP1/DNMAP1, RUVBL1/TIP49, RUVBL2, actin, ACTL6A/BAF53A, VPS72 and YEATS4/GAS41. Component of the BAF53 complex, at least composed of ACTL6A/BAF53A, RUVBL1/TIP49, SMARCA2/BRM, and TRRAP/PAF400. Component of some MLL1/MLL complex, at least composed of the core components KMT2A/MLL1, ASH2L, HCFC1/HCF1, WDR5 and RBBP5, as well as the facultative components BACC1, CHD8, E2F6, HSP70, INO80C, KANSL1, LAS1L, MAX, MCRS1, MGA, MYST1/MOF, PELP1, PHF20, PRP31, RING2, RUVB1/TIP49A, RUVB2/TIP49B, SENP3, TAF1, TAF4, TAF6, TAF7, TAF9 and TEX10. Associates with alpha and gamma tubulins, particularly during metaphase and early anaphase. Interacts with NPAT. Component of the chromatin-remodeling INO80 complex; specifically part of a complex module associated with the helicase ATP-binding and the helicase C-terminal domain of INO80. Interacts with IGHMBP2. Interacts with OFD1. Interacts with HINT1. Component of a complex with USP49 and PSMC5. Component of a SWR1-like complex. Component of the R2TP complex composed at least of RUVBL1, RUVBL2, RPAP3 and PIHD1. Component of the PAQosome complex which is responsible for the biogenesis of several protein complexes and which consists of R2TP complex members RUVBL1, RUVBL2, RPAP3 and PIH1D1, URI complex members PFDN2, PFDN6, PDRG1, UXT and URI1 as well as ASDURF, POLR2E and DNAAF10/WDR92. Interacts with PIH1D1. Interacts with ITFG1. Interacts with WAC; WAC positively regulates MTOR activity by promoting the assembly of the TTT complex composed of TELO2, TTI1 and TTI2 and the RUVBL complex composed of RUVBL1 and RUVBL2 into the TTT-RUVBL complex which leads to the dimerization of the mTORC1 complex and its subsequent activation. The RUVBL1/RUVBL2 complex interacts with ZNHIT1 (via HIT-type zinc finger), ZNHIT3 (via HIT-type zinc finger), ZNHIT6 (via HIT-type zinc finger) and DDX59/ZNHIT5 (via HIT-type zinc finger) in the presence of ADP. Interacts with NOPCHAP1; the interaction is direct and disrupted upon ATP binding. Interacts with SMG1. Interacts with NOP2, NOP56 and NUFIP1. In terms of assembly, (Microbial infection) Interacts with Mumps L polymerase; this interaction regulates the viral transcription. Ubiquitously expressed with high expression in heart, skeletal muscle and testis.

It localises to the nucleus matrix. The protein localises to the nucleus. Its subcellular location is the nucleoplasm. The protein resides in the cytoplasm. It is found in the membrane. It localises to the cytoskeleton. The protein localises to the microtubule organizing center. Its subcellular location is the centrosome. The protein resides in the dynein axonemal particle. The catalysed reaction is ATP + H2O = ADP + phosphate + H(+). Functionally, possesses single-stranded DNA-stimulated ATPase and ATP-dependent DNA helicase (3' to 5') activity; hexamerization is thought to be critical for ATP hydrolysis and adjacent subunits in the ring-like structure contribute to the ATPase activity. Component of the NuA4 histone acetyltransferase complex which is involved in transcriptional activation of select genes principally by acetylation of nucleosomal histones H4 and H2A. This modification may both alter nucleosome-DNA interactions and promote interaction of the modified histones with other proteins which positively regulate transcription. This complex may be required for the activation of transcriptional programs associated with oncogene and proto-oncogene mediated growth induction, tumor suppressor mediated growth arrest and replicative senescence, apoptosis, and DNA repair. The NuA4 complex ATPase and helicase activities seem to be, at least in part, contributed by the association of RUVBL1 and RUVBL2 with EP400. NuA4 may also play a direct role in DNA repair when recruited to sites of DNA damage. Component of a SWR1-like complex that specifically mediates the removal of histone H2A.Z/H2AZ1 from the nucleosome. Proposed core component of the chromatin remodeling INO80 complex which exhibits DNA- and nucleosome-activated ATPase activity and catalyzes ATP-dependent nucleosome sliding. Plays an essential role in oncogenic transformation by MYC and also modulates transcriptional activation by the LEF1/TCF1-CTNNB1 complex. Essential for cell proliferation. May be able to bind plasminogen at cell surface and enhance plasminogen activation. In Homo sapiens (Human), this protein is RuvB-like 1.